Here is a 393-residue protein sequence, read N- to C-terminus: Cytochrome b (393 aa).

Transmembrane regions (helical) follow at residues 38 to 58, 82 to 104, 119 to 139, and 185 to 205; these read FGSL…FLAM, WLLR…LHIF, VWCL…IGYV, and FFSL…LHLA. Positions 88 and 102 each coordinate heme b. Positions 189 and 203 each coordinate heme b. An a ubiquinone-binding site is contributed by histidine 208. Helical transmembrane passes span 231–251, 295–315, 327–347, and 354–373; these read FYVK…IWIF, VGGV…PFFK, IYQG…WIGC, and FVTI…AITP.

It belongs to the cytochrome b family. As to quaternary structure, the main subunits of complex b-c1 are: cytochrome b, cytochrome c1 and the Rieske protein. Heme b is required as a cofactor. In terms of processing, first mitochondrial-encoded protein to be shown to have its N-terminal methionine cleaved off.

The protein resides in the mitochondrion inner membrane. Its function is as follows. Component of the ubiquinol-cytochrome c reductase complex (complex III or cytochrome b-c1 complex) that is part of the mitochondrial respiratory chain. The b-c1 complex mediates electron transfer from ubiquinol to cytochrome c. Contributes to the generation of a proton gradient across the mitochondrial membrane that is then used for ATP synthesis. The sequence is that of Cytochrome b (MT-CYB) from Solanum tuberosum (Potato).